The chain runs to 685 residues: Stromal interaction molecule 1 (685 aa).

A signal peptide spans 1–22 (MDVCVRLALWLLWGLLLHQGQS). Residues 23 to 213 (LSHSHSEKAT…LLTRHNHLKD (191 aa)) are Extracellular-facing. 2 consecutive EF-hand domains span residues 64–97 (SFEA…EDLN) and 102–126 (TVKH…AWKS). Positions 76, 78, 80, 82, and 87 each coordinate Ca(2+). N-linked (GlcNAc...) asparagine glycosylation is found at Asn131 and Asn171. Residues 132 to 200 (WTVDEVVQWL…QLKALDTVLF (69 aa)) enclose the SAM domain. Residues 214–234 (FMLVVSIVIGVGGCWFAYIQN) traverse the membrane as a helical segment. The Cytoplasmic segment spans residues 235-685 (RYSKEHMKKM…LKIFKKPLKK (451 aa)). Positions 248 to 442 (LEGLHRAEQS…IEILCGFQIV (195 aa)) form a coiled coil. Phosphoserine is present on Ser257. Residues 344-442 (PEALQKWLQL…IEILCGFQIV (99 aa)) are SOAR/CAD. Residues 475-483 (DDVDDMDEE) are contributes to fast Ca(2+)-dependent inactivation of CRAC channels. Residues 490–499 (MQSPSLQSSV) are compositionally biased toward low complexity. The segment at 490 to 542 (MQSPSLQSSVRQRLTEPQHGLGSQRDLTHSDSESSLHMSDRQRVAPKPPQMSR) is disordered. Position 504 is a phosphothreonine (Thr504). Residue Ser512 is modified to Phosphoserine. Residues 515 to 532 (DLTHSDSESSLHMSDRQR) show a composition bias toward basic and acidic residues. Thr517 is subject to Phosphothreonine. Residues Ser519, Ser521, Ser523, Ser524, Ser567, Ser575, Ser602, Ser608, Ser618, Ser621, and Ser628 each carry the phosphoserine modification. Positions 596-685 (LMELSPSAPP…LKIFKKPLKK (90 aa)) are disordered. Residues 608–620 (SPHLDSSRSHSPS) show a composition bias toward low complexity. Positions 642–645 (TRIP) match the Microtubule tip localization signal motif. Positions 655-666 (EEDNGSIGEETD) are enriched in acidic residues. Ser660 is subject to Phosphoserine. A Phosphothreonine modification is found at Thr665. Residue Ser668 is modified to Phosphoserine. Over residues 670-685 (GRKKFPLKIFKKPLKK) the composition is skewed to basic residues. A required for generation of inwardly rectifying CRAC currents region spans residues 672 to 685 (KKFPLKIFKKPLKK).

As to quaternary structure, monomer in the presence of Ca(2+); it oligomerizes in absence of Ca(2+). Forms homooligomers and heterooligomers with STIM2. Interacts with pore-forming subunits of CRAC channels, ORAI1, ORAI2 and ORAI3; this interaction is potentiated upon Ca(2+) store depletion. Interacts (via the transmembrane region and the SOAR/CAD domain) with SPPL3; the interaction promotes the binding of STIM1 to ORAI1. Interacts (via the SOAR/CAD domain) with ORAI1. Interacts with MAPRE1; probably required for targeting to the growing microtubule plus ends. Interacts with CRACR2A/EFCAB4B; the interaction is direct and takes place in absence of Ca(2+). Forms a complex with CRACR2A/EFCAB4B and ORAI1 at low concentration of Ca(2+), the complex dissociates at elevated Ca(2+) concentrations. Interacts with SARAF, promoting a slow inactivation of STIM1-dependent SOCE activity, possibly by facilitating the deoligomerization of STIM1. Interacts with EFHB; the interaction takes place upon Ca(2+)-store depletion and inhibits the association with SARAF. Interacts with ASPH (isoform 8). Interacts with SLC35G1; intracellular Ca(2+)-dependent. May interact with ATP1A1, ATP2A2, ATP2B1, ATP2B4, KPNB1 and XPO1; through SLC35G1. Interacts with TMEM203. Interacts with STIMATE, promoting STIM1 conformational switch. Interacts with TMEM178A. Interacts with CASQ1 (via C-terminal end and preferentially with the monomeric form); this interaction increases in response to a depletion of intracellular Ca(2+), decreases both STIM1 aggregation and clustering, interaction of STIM1 with ORAI1 and store-operated Ca(2+) entry (SOCE) activity. Interacts with ADCY8. In terms of processing, glycosylation is required for cell surface expression. Post-translationally, phosphorylated predominantly on Ser residues. Ubiquitously expressed in various human primary cells and tumor cell lines.

The protein localises to the cell membrane. The protein resides in the endoplasmic reticulum membrane. It localises to the cytoplasm. It is found in the cytoskeleton. Its subcellular location is the sarcoplasmic reticulum. Functionally, acts as a Ca(2+) sensor that gates two major inward rectifying Ca(2+) channels at the plasma membrane: Ca(2+) release-activated Ca(2+) (CRAC) channels and arachidonate-regulated Ca(2+)-selective (ARC) channels. Plays a role in mediating store-operated Ca(2+) entry (SOCE), a Ca(2+) influx following depletion of intracellular Ca(2+) stores. Upon Ca(2+) depletion, translocates from the endoplasmic reticulum to the plasma membrane where it activates CRAC channel pore-forming subunits ORA1, ORA2 and ORAI3 to generate sustained and oscillatory Ca(2+) entry. Involved in enamel formation. The sequence is that of Stromal interaction molecule 1 (STIM1) from Homo sapiens (Human).